Here is a 111-residue protein sequence, read N- to C-terminus: Phosphoribosyl-ATP pyrophosphatase (111 aa).

Belongs to the PRA-PH family.

The protein resides in the cytoplasm. It carries out the reaction 1-(5-phospho-beta-D-ribosyl)-ATP + H2O = 1-(5-phospho-beta-D-ribosyl)-5'-AMP + diphosphate + H(+). It participates in amino-acid biosynthesis; L-histidine biosynthesis; L-histidine from 5-phospho-alpha-D-ribose 1-diphosphate: step 2/9. The sequence is that of Phosphoribosyl-ATP pyrophosphatase (hisE) from Pseudomonas aeruginosa (strain ATCC 15692 / DSM 22644 / CIP 104116 / JCM 14847 / LMG 12228 / 1C / PRS 101 / PAO1).